We begin with the raw amino-acid sequence, 208 residues long: Ribosomal RNA large subunit methyltransferase E (208 aa).

Positions 62, 64, 82, 98, and 123 each coordinate S-adenosyl-L-methionine. The active-site Proton acceptor is Lys163.

It belongs to the class I-like SAM-binding methyltransferase superfamily. RNA methyltransferase RlmE family.

It localises to the cytoplasm. It carries out the reaction uridine(2552) in 23S rRNA + S-adenosyl-L-methionine = 2'-O-methyluridine(2552) in 23S rRNA + S-adenosyl-L-homocysteine + H(+). Functionally, specifically methylates the uridine in position 2552 of 23S rRNA at the 2'-O position of the ribose in the fully assembled 50S ribosomal subunit. The protein is Ribosomal RNA large subunit methyltransferase E of Idiomarina loihiensis (strain ATCC BAA-735 / DSM 15497 / L2-TR).